Here is a 1266-residue protein sequence, read N- to C-terminus: Kinesin-like protein KIN-12G (1266 aa).

A disordered region spans residues 1–22; it reads MPSDCGDDDHGGGSAPAGFELQ. Positions 32 to 369 constitute a Kinesin motor domain; it reads NVQVVIRVRP…LKFAQRAKYI (338 aa). 113–120 is a binding site for ATP; sequence GQTGSGKT. Coiled coils occupy residues 613-668, 817-854, 1029-1060, and 1084-1120; these read MEFI…SEAV, RSELTDLQLQLDEMHEENDKLMGLYEKAMQERDEFKRK, ARESETALRSKIDGLKVKLRSFEAQRKEAERV, and SELLRSEEERTKLLSELKKSREQLIMVQKEIKSMNRH.

Belongs to the TRAFAC class myosin-kinesin ATPase superfamily. Kinesin family. KIN-12 subfamily.

The chain is Kinesin-like protein KIN-12G from Oryza sativa subsp. japonica (Rice).